Consider the following 356-residue polypeptide: Methionine import ATP-binding protein MetN 1 (356 aa).

An ABC transporter domain is found at 2-241 (IELKNISVTF…PQQPLTKDFI (240 aa)). Position 38–45 (38–45 (GYSGAGKS)) interacts with ATP.

The protein belongs to the ABC transporter superfamily. Methionine importer (TC 3.A.1.24) family. In terms of assembly, the complex is composed of two ATP-binding proteins (MetN), two transmembrane proteins (MetI) and a solute-binding protein (MetQ).

The protein resides in the cell membrane. The enzyme catalyses L-methionine(out) + ATP + H2O = L-methionine(in) + ADP + phosphate + H(+). The catalysed reaction is D-methionine(out) + ATP + H2O = D-methionine(in) + ADP + phosphate + H(+). Its function is as follows. Part of the ABC transporter complex MetNIQ involved in methionine import. Responsible for energy coupling to the transport system. This Enterococcus faecalis (strain ATCC 700802 / V583) protein is Methionine import ATP-binding protein MetN 1.